We begin with the raw amino-acid sequence, 130 residues long: Protein ApaG (130 aa).

The ApaG domain maps to 3 to 127; it reads KAETRGITVT…FSLDSPHLRR (125 aa).

The polypeptide is Protein ApaG (Methylorubrum populi (strain ATCC BAA-705 / NCIMB 13946 / BJ001) (Methylobacterium populi)).